Consider the following 821-residue polypeptide: Leucine--tRNA ligase (821 aa).

The 'HIGH' region signature appears at 42–52 (PYPSGKLHMGH). Residues 583-587 (KMSKS) carry the 'KMSKS' region motif. K586 contacts ATP.

The protein belongs to the class-I aminoacyl-tRNA synthetase family.

Its subcellular location is the cytoplasm. The enzyme catalyses tRNA(Leu) + L-leucine + ATP = L-leucyl-tRNA(Leu) + AMP + diphosphate. The polypeptide is Leucine--tRNA ligase (Carboxydothermus hydrogenoformans (strain ATCC BAA-161 / DSM 6008 / Z-2901)).